Consider the following 243-residue polypeptide: uncharacterized protein (243 aa).

Residues 1-16 (MKHFIILFLLLFVTAG) form the signal peptide. Cys-17 carries the N-palmitoyl cysteine lipid modification. Cys-17 carries S-diacylglycerol cysteine lipidation.

It is found in the cell membrane. This is an uncharacterized protein from Bacillus subtilis (strain 168).